A 312-amino-acid chain; its full sequence is Serine/threonine-protein phosphatase CPPED1 (312 aa).

Position 2 is a phosphoserine (serine 2). Positions 47 to 250 are catalytic; sequence KAWSTGNCDA…AVFSGHYHRN (204 aa). 3 residues coordinate a divalent metal cation: aspartate 90, asparagine 127, and histidine 246. At serine 293 the chain carries Phosphoserine.

It belongs to the metallophosphoesterase superfamily. CPPED1 family. A divalent metal cation is required as a cofactor.

It is found in the cytoplasm. The enzyme catalyses O-phospho-L-seryl-[protein] + H2O = L-seryl-[protein] + phosphate. It catalyses the reaction O-phospho-L-threonyl-[protein] + H2O = L-threonyl-[protein] + phosphate. In terms of biological role, protein phosphatase that dephosphorylates AKT family kinase specifically at 'Ser-473', blocking cell cycle progression and promoting cell apoptosis. May play an inhibitory role in glucose uptake by adipocytes. The chain is Serine/threonine-protein phosphatase CPPED1 (Cpped1) from Mus musculus (Mouse).